The chain runs to 490 residues: 4-hydroxyphenylacetaldehyde synthase (490 aa).

3 residues coordinate L-phenylalanine: proline 97, histidine 198, and histidine 313. Lysine 314 carries the post-translational modification N6-(pyridoxal phosphate)lysine. Phenylalanine 343 provides a ligand contact to L-phenylalanine.

Belongs to the group II decarboxylase family. As to quaternary structure, homodimer. It depends on pyridoxal 5'-phosphate as a cofactor.

It catalyses the reaction L-tyrosine + O2 + H2O + H(+) = (4-hydroxyphenyl)acetaldehyde + H2O2 + NH4(+) + CO2. Functionally, catalyzes the production of 4-hydroxyphenylacetaldehyde (HPAA) directly from L-tyrosine, tyramine not being formed as an intermediate. The protein is 4-hydroxyphenylacetaldehyde synthase of Rhodiola rosea (Roseroot).